The primary structure comprises 84 residues: MTDIFANPDKTLDALGLRCPEPVMMVRKTVRHMEEGQTLLIIADDPATTRDIPGFCRFMDHQLLAQDTEQTPYRYLVRKGITAG.

The active-site Cysteine persulfide intermediate is the cysteine 19.

It belongs to the sulfur carrier protein TusA family. In terms of assembly, interacts with IscS.

It localises to the cytoplasm. Its pathway is tRNA modification. Sulfur carrier protein involved in sulfur trafficking in the cell. Part of a sulfur-relay system required for 2-thiolation during synthesis of 2-thiouridine of the modified wobble base 5-methylaminomethyl-2-thiouridine (mnm(5)s(2)U) in tRNA. Interacts with IscS and stimulates its cysteine desulfurase activity. Accepts an activated sulfur from IscS, which is then transferred to TusD, and thus determines the direction of sulfur flow from IscS to 2-thiouridine formation. Also appears to be involved in sulfur transfer for the biosynthesis of molybdopterin. This Yersinia pseudotuberculosis serotype O:1b (strain IP 31758) protein is Sulfur carrier protein TusA.